Consider the following 140-residue polypeptide: Organic hydroperoxide resistance protein-like (140 aa).

Belongs to the OsmC/Ohr family.

In Mycoplasma pneumoniae (strain ATCC 29342 / M129 / Subtype 1) (Mycoplasmoides pneumoniae), this protein is Organic hydroperoxide resistance protein-like.